Here is a 203-residue protein sequence, read N- to C-terminus: Peptidyl-tRNA hydrolase (203 aa).

Residue Tyr26 coordinates tRNA. The active-site Proton acceptor is the His31. 3 residues coordinate tRNA: Tyr82, Asn84, and Asn130.

It belongs to the PTH family. In terms of assembly, monomer.

The protein localises to the cytoplasm. It catalyses the reaction an N-acyl-L-alpha-aminoacyl-tRNA + H2O = an N-acyl-L-amino acid + a tRNA + H(+). In terms of biological role, hydrolyzes ribosome-free peptidyl-tRNAs (with 1 or more amino acids incorporated), which drop off the ribosome during protein synthesis, or as a result of ribosome stalling. Functionally, catalyzes the release of premature peptidyl moieties from peptidyl-tRNA molecules trapped in stalled 50S ribosomal subunits, and thus maintains levels of free tRNAs and 50S ribosomes. This chain is Peptidyl-tRNA hydrolase, found in Streptomyces avermitilis (strain ATCC 31267 / DSM 46492 / JCM 5070 / NBRC 14893 / NCIMB 12804 / NRRL 8165 / MA-4680).